We begin with the raw amino-acid sequence, 308 residues long: uncharacterized protein (308 aa).

This is an uncharacterized protein from Ictalurid herpesvirus 1 (strain Auburn) (IcHV-1).